A 129-amino-acid polypeptide reads, in one-letter code: Small ribosomal subunit protein uS8 (129 aa).

The protein belongs to the universal ribosomal protein uS8 family. As to quaternary structure, part of the 30S ribosomal subunit. Contacts proteins S5 and S12.

In terms of biological role, one of the primary rRNA binding proteins, it binds directly to 16S rRNA central domain where it helps coordinate assembly of the platform of the 30S subunit. The polypeptide is Small ribosomal subunit protein uS8 (Spiroplasma kunkelii).